We begin with the raw amino-acid sequence, 443 residues long: Probable D-serine dehydratase (443 aa).

Position 118 is an N6-(pyridoxal phosphate)lysine (Lys118).

Belongs to the serine/threonine dehydratase family. DsdA subfamily. Pyridoxal 5'-phosphate serves as cofactor.

The enzyme catalyses D-serine = pyruvate + NH4(+). The sequence is that of Probable D-serine dehydratase from Vibrio parahaemolyticus serotype O3:K6 (strain RIMD 2210633).